Here is a 490-residue protein sequence, read N- to C-terminus: Betaine aldehyde dehydrogenase (490 aa).

The K(+) site is built by Thr26, Ile27, and Asp93. 150-152 (GAW) serves as a coordination point for NAD(+). Lys162 acts as the Charge relay system in catalysis. 176–179 (KPSE) is a binding site for NAD(+). Val180 is a binding site for K(+). 230–233 (GVAS) is an NAD(+) binding site. Leu246 contributes to the K(+) binding site. The Proton acceptor role is filled by Glu252. NAD(+)-binding residues include Gly254, Cys286, and Glu387. Residue Cys286 is the Nucleophile of the active site. Cys286 is subject to Cysteine sulfenic acid (-SOH). Residues Lys457 and Gly460 each coordinate K(+). The Charge relay system role is filled by Glu464.

It belongs to the aldehyde dehydrogenase family. As to quaternary structure, dimer of dimers. K(+) is required as a cofactor.

It catalyses the reaction betaine aldehyde + NAD(+) + H2O = glycine betaine + NADH + 2 H(+). Its pathway is amine and polyamine biosynthesis; betaine biosynthesis via choline pathway; betaine from betaine aldehyde: step 1/1. Its function is as follows. Involved in the biosynthesis of the osmoprotectant glycine betaine. Catalyzes the irreversible oxidation of betaine aldehyde to the corresponding acid. This Escherichia coli (strain ATCC 8739 / DSM 1576 / NBRC 3972 / NCIMB 8545 / WDCM 00012 / Crooks) protein is Betaine aldehyde dehydrogenase.